The primary structure comprises 506 residues: ATP synthase subunit alpha (506 aa).

Residue 169-176 (GDRGTGKT) participates in ATP binding.

It belongs to the ATPase alpha/beta chains family. As to quaternary structure, F-type ATPases have 2 components, CF(1) - the catalytic core - and CF(0) - the membrane proton channel. CF(1) has five subunits: alpha(3), beta(3), gamma(1), delta(1), epsilon(1). CF(0) has three main subunits: a(1), b(2) and c(9-12). The alpha and beta chains form an alternating ring which encloses part of the gamma chain. CF(1) is attached to CF(0) by a central stalk formed by the gamma and epsilon chains, while a peripheral stalk is formed by the delta and b chains.

It is found in the cell membrane. The catalysed reaction is ATP + H2O + 4 H(+)(in) = ADP + phosphate + 5 H(+)(out). Its function is as follows. Produces ATP from ADP in the presence of a proton gradient across the membrane. The alpha chain is a regulatory subunit. The sequence is that of ATP synthase subunit alpha from Symbiobacterium thermophilum (strain DSM 24528 / JCM 14929 / IAM 14863 / T).